The following is a 1051-amino-acid chain: Carbamoyl phosphate synthase large chain (1051 aa).

Positions 1–399 (MKETPKKVLV…SLQKAVRMLD (399 aa)) are carboxyphosphate synthetic domain. Residues arginine 127, arginine 167, glycine 173, glycine 174, lysine 206, leucine 208, glutamate 213, glycine 239, valine 240, histidine 241, glutamine 282, and glutamate 296 each coordinate ATP. The 195-residue stretch at 131–325 (RETMIENNLP…LAYVSAKLAL (195 aa)) folds into the ATP-grasp 1 domain. Residues glutamine 282, glutamate 296, and asparagine 298 each contribute to the Mg(2+) site. Mn(2+) contacts are provided by glutamine 282, glutamate 296, and asparagine 298. Positions 400 to 548 (IGEPGVVGGK…LTYNGTEDDL (149 aa)) are oligomerization domain. The segment at 549–930 (EFSQGNKLLM…LKSWLSSIPN (382 aa)) is carbamoyl phosphate synthetic domain. Residues 673–863 (SKLLDKLGIS…LINESMKAIF (191 aa)) enclose the ATP-grasp 2 domain. Arginine 709, lysine 748, isoleucine 750, glutamate 755, glycine 779, valine 780, histidine 781, serine 782, glutamine 822, and glutamate 834 together coordinate ATP. Glutamine 822, glutamate 834, and asparagine 836 together coordinate Mg(2+). Residues glutamine 822, glutamate 834, and asparagine 836 each contribute to the Mn(2+) site. An MGS-like domain is found at 930-1051 (NRIPNKNGIA…FEISEYGGGI (122 aa)). The allosteric domain stretch occupies residues 931–1051 (RIPNKNGIAL…FEISEYGGGI (121 aa)).

The protein belongs to the CarB family. Composed of two chains; the small (or glutamine) chain promotes the hydrolysis of glutamine to ammonia, which is used by the large (or ammonia) chain to synthesize carbamoyl phosphate. Tetramer of heterodimers (alpha,beta)4. The cofactor is Mg(2+). It depends on Mn(2+) as a cofactor.

The catalysed reaction is hydrogencarbonate + L-glutamine + 2 ATP + H2O = carbamoyl phosphate + L-glutamate + 2 ADP + phosphate + 2 H(+). It catalyses the reaction hydrogencarbonate + NH4(+) + 2 ATP = carbamoyl phosphate + 2 ADP + phosphate + 2 H(+). It participates in amino-acid biosynthesis; L-arginine biosynthesis; carbamoyl phosphate from bicarbonate: step 1/1. It functions in the pathway pyrimidine metabolism; UMP biosynthesis via de novo pathway; (S)-dihydroorotate from bicarbonate: step 1/3. In terms of biological role, large subunit of the glutamine-dependent carbamoyl phosphate synthetase (CPSase). CPSase catalyzes the formation of carbamoyl phosphate from the ammonia moiety of glutamine, carbonate, and phosphate donated by ATP, constituting the first step of 2 biosynthetic pathways, one leading to arginine and/or urea and the other to pyrimidine nucleotides. The large subunit (synthetase) binds the substrates ammonia (free or transferred from glutamine from the small subunit), hydrogencarbonate and ATP and carries out an ATP-coupled ligase reaction, activating hydrogencarbonate by forming carboxy phosphate which reacts with ammonia to form carbamoyl phosphate. The sequence is that of Carbamoyl phosphate synthase large chain from Saccharolobus islandicus (strain M.16.4 / Kamchatka #3) (Sulfolobus islandicus).